The following is a 159-amino-acid chain: Galactose-specific lectin nattectin (159 aa).

The first 21 residues, 1 to 21 (MASVPHFTVFLFLACALGIGA), serve as a signal peptide directing secretion. A propeptide spanning residues 22 to 24 (NVT) is cleaved from the precursor. 3 disulfides stabilise this stretch: Cys-31–Cys-42, Cys-59–Cys-155, and Cys-132–Cys-147. Positions 38 to 156 (HGSRCFTFHR…CKVKRSFLCA (119 aa)) constitute a C-type lectin domain. Residues Gln-122, Asp-124, Glu-130, and Asn-143 each contribute to the Ca(2+) site. The short motif at 122–124 (QPD) is the Galactose-binding element.

As to quaternary structure, monomer. Not glycosylated. In terms of tissue distribution, expressed by the venom gland.

It localises to the secreted. Its function is as follows. Galactose specific lectin that exhibits hemagglutination activity (minimum hemagluttination concentration = 2.5 ug/well) in a calcium-independent fashion. Has remarkable pro-inflammatory activity, inducing neutrophil mobilization in mice. Plays a crucial role in the innate immune system and chronic manifestations, especially in neutrophil mobilization. The chain is Galactose-specific lectin nattectin from Thalassophryne nattereri (Copper Joe toadfish).